A 191-amino-acid chain; its full sequence is Putative glutathione-dependent formaldehyde-activating enzyme (191 aa).

The CENP-V/GFA domain occupies 20–166 (FAGGNLYCKC…FKAVGLETYD (147 aa)). Positions 27, 29, 48, 50, 53, 95, and 98 each coordinate Zn(2+).

This sequence belongs to the Gfa family. Requires Zn(2+) as cofactor.

The enzyme catalyses S-(hydroxymethyl)glutathione = glutathione + formaldehyde. Its pathway is one-carbon metabolism; formaldehyde degradation; formate from formaldehyde (glutathione route): step 1/3. In terms of biological role, catalyzes the condensation of formaldehyde and glutathione to S-hydroxymethylglutathione. This chain is Putative glutathione-dependent formaldehyde-activating enzyme, found in Aspergillus terreus (strain NIH 2624 / FGSC A1156).